We begin with the raw amino-acid sequence, 382 residues long: uncharacterized protein (382 aa).

Transmembrane regions (helical) follow at residues 14-34 (GLLLLTLAIAVLNTLVPLWLA), 45-65 (MVSSSYFTGNLVGTLFTGYLI), 75-95 (YLASLIFAAGCVGLGVMVGFW), 102-122 (FIAGIGCAMIWVVVESALMCS), 131-151 (LLAAYMMVYYVGTFLGQLLVS), 157-177 (LLHVLPWVTGMILAGILPLLF), 204-224 (LGVNGCIISGIVLGSLYGLMP), 235-255 (ASIGFWMAVLVSAGILGQWPV), 265-284 (LLVLRVQVFVVILGSIVMLT), 289-311 (APALFILGAAGFTLYPVAMAWAC), 325-345 (ALLLSYTVGSLLGPSFTAMLM), and 349-369 (SDNLLFLMIASVSFIYLLMLL).

Belongs to the major facilitator superfamily. YcaD (TC 2.A.1.26) family.

Its subcellular location is the cell inner membrane. This is an uncharacterized protein from Salmonella arizonae (strain ATCC BAA-731 / CDC346-86 / RSK2980).